The following is a 195-amino-acid chain: Pyridoxal 5'-phosphate synthase subunit PdxT (195 aa).

Position 46 to 48 (46 to 48) interacts with L-glutamine; that stretch reads GES. Residue C78 is the Nucleophile of the active site. Residues R107 and 136-137 each bind L-glutamine; that span reads IR. Active-site charge relay system residues include H173 and E175.

Belongs to the glutaminase PdxT/SNO family. In terms of assembly, in the presence of PdxS, forms a dodecamer of heterodimers. Only shows activity in the heterodimer.

The catalysed reaction is aldehydo-D-ribose 5-phosphate + D-glyceraldehyde 3-phosphate + L-glutamine = pyridoxal 5'-phosphate + L-glutamate + phosphate + 3 H2O + H(+). The enzyme catalyses L-glutamine + H2O = L-glutamate + NH4(+). It participates in cofactor biosynthesis; pyridoxal 5'-phosphate biosynthesis. Its function is as follows. Catalyzes the hydrolysis of glutamine to glutamate and ammonia as part of the biosynthesis of pyridoxal 5'-phosphate. The resulting ammonia molecule is channeled to the active site of PdxS. This chain is Pyridoxal 5'-phosphate synthase subunit PdxT, found in Dehalococcoides mccartyi (strain ATCC BAA-2100 / JCM 16839 / KCTC 5957 / BAV1).